Reading from the N-terminus, the 577-residue chain is F-box/TPR repeat protein pof3 (577 aa).

TPR repeat units lie at residues 6 to 39, 41 to 74, and 76 to 108; these read VKAI…EPNP, IDLF…NARN, and RGYL…VHKM. The 43-residue stretch at 138 to 180 folds into the F-box domain; that stretch reads ILPREVLLCILQQLNFKSIVQCMQVCKHWRDCIKKEPSLFCCL.

A part of the E3 ubiquitin ligase Skp1-Cullin-1-F-box (SCF) complex. Interacts with cul1, mcl1 and skp1.

The protein localises to the mitochondrion. Its subcellular location is the nucleus. Functionally, has a role in substrate recognition in the Skp1-Cullin-1/Cdc53-F-box (SCF) ubiquitin ligase complex. Required for the maintenance of telomere length and transcriptional silencing at the telomere. Also required for chromosome segregation. This is F-box/TPR repeat protein pof3 (pof3) from Schizosaccharomyces pombe (strain 972 / ATCC 24843) (Fission yeast).